The chain runs to 98 residues: Citrate lyase acyl carrier protein (98 aa).

At Ser-14 the chain carries O-(phosphoribosyl dephospho-coenzyme A)serine.

This sequence belongs to the CitD family. Oligomer with a subunit composition of (alpha,beta,gamma)6.

The protein resides in the cytoplasm. Its function is as follows. Covalent carrier of the coenzyme of citrate lyase. This Vibrio cholerae serotype O1 (strain ATCC 39541 / Classical Ogawa 395 / O395) protein is Citrate lyase acyl carrier protein.